We begin with the raw amino-acid sequence, 60 residues long: Spanin, outer lipoprotein subunit (60 aa).

An N-terminal signal peptide occupies residues M1–G19. A lipid anchor (N-palmitoyl cysteine; by host) is attached at C20. C20 carries the S-diacylglycerol cysteine; by host lipid modification. Residues C20–G60 are Periplasmic-facing. A proline-rich region spans residues P32–P44.

The protein belongs to the Lambdavirus o-spanin family. Homodimer; disulfide-linked. Interacts (via C-terminus) with the spanin inner membrane subunit (via C-terminus). Part of the spanin complex which spans the entire periplasmic space. The spanin complex is composed of one homodimer of the i-spanin linked by intermolecular disulfide bonds involving two Cys residues and one homodimer of the o-spanin covalently linked by an intermolecular disulfide bond involving one Cys.

It localises to the host cell outer membrane. In terms of biological role, component of the spanin complex that disrupts the host outer membrane and participates in cell lysis during virus exit. The spanin complex conducts the final step in host lysis by disrupting the outer membrane after holin and endolysin action have permeabilized the inner membrane and degraded the host peptidoglycans. Host outer membrane disruption due to local fusion between the inner and outer membrane performed by the spanin complex. In Escherichia phage lambda (Bacteriophage lambda), this protein is Spanin, outer lipoprotein subunit (Rz1).